The primary structure comprises 466 residues: 3-isopropylmalate dehydratase large subunit (466 aa).

[4Fe-4S] cluster is bound by residues C347, C407, and C410.

This sequence belongs to the aconitase/IPM isomerase family. LeuC type 1 subfamily. In terms of assembly, heterodimer of LeuC and LeuD. It depends on [4Fe-4S] cluster as a cofactor.

The enzyme catalyses (2R,3S)-3-isopropylmalate = (2S)-2-isopropylmalate. It functions in the pathway amino-acid biosynthesis; L-leucine biosynthesis; L-leucine from 3-methyl-2-oxobutanoate: step 2/4. In terms of biological role, catalyzes the isomerization between 2-isopropylmalate and 3-isopropylmalate, via the formation of 2-isopropylmaleate. In Buchnera aphidicola subsp. Thelaxes suberi, this protein is 3-isopropylmalate dehydratase large subunit.